Consider the following 124-residue polypeptide: MIQTILAVSIAGIAGTLLRFAAGTWVSANWPRYFYAATLAVNIVGCLIIGVLYGLFLSRPEVPVEIRAGLIVGFVGGLTTFSSFSLDTLRLLESGQVPLALGYAGISVFGGLLATWAGLSLTRL.

A run of 4 helical transmembrane segments spans residues 5 to 25, 37 to 57, 69 to 89, and 99 to 119; these read ILAVSIAGIAGTLLRFAAGTW, ATLAVNIVGCLIIGVLYGLFL, GLIVGFVGGLTTFSSFSLDTL, and LALGYAGISVFGGLLATWAGL. G76 and T79 together coordinate Na(+).

Belongs to the fluoride channel Fluc/FEX (TC 1.A.43) family.

Its subcellular location is the cell inner membrane. It carries out the reaction fluoride(in) = fluoride(out). With respect to regulation, na(+) is not transported, but it plays an essential structural role and its presence is essential for fluoride channel function. Functionally, fluoride-specific ion channel. Important for reducing fluoride concentration in the cell, thus reducing its toxicity. The sequence is that of Fluoride-specific ion channel FluC from Pseudomonas syringae pv. tomato (strain ATCC BAA-871 / DC3000).